A 72-amino-acid polypeptide reads, in one-letter code: MLVVKRKKGESILIGDNIEINIVDIDNGSVKISIQAPREVTILRKELYKEIEEENKKAIKVDMSLLKKLNKK.

This sequence belongs to the CsrA/RsmA family. In terms of assembly, homodimer; the beta-strands of each monomer intercalate to form a hydrophobic core, while the alpha-helices form wings that extend away from the core.

It localises to the cytoplasm. Its function is as follows. A translational regulator that binds mRNA to regulate translation initiation and/or mRNA stability. Usually binds in the 5'-UTR at or near the Shine-Dalgarno sequence preventing ribosome-binding, thus repressing translation. Its main target seems to be the major flagellin gene, while its function is anatagonized by FliW. The polypeptide is Translational regulator CsrA (Clostridium novyi (strain NT)).